Consider the following 351-residue polypeptide: Adenine deaminase (351 aa).

Zn(2+) contacts are provided by H19, H21, and H208. Residue E211 is the Proton donor of the active site. Residue D288 coordinates Zn(2+). Position 289 (D289) interacts with substrate.

This sequence belongs to the metallo-dependent hydrolases superfamily. Adenosine and AMP deaminases family. Adenine deaminase type 2 subfamily. It depends on Zn(2+) as a cofactor.

It localises to the cytoplasm. It is found in the nucleus. The enzyme catalyses adenine + H2O + H(+) = hypoxanthine + NH4(+). Functionally, catalyzes the hydrolytic deamination of adenine to hypoxanthine. Plays an important role in the purine salvage pathway and in nitrogen catabolism. This chain is Adenine deaminase (aah1), found in Aspergillus oryzae (strain ATCC 42149 / RIB 40) (Yellow koji mold).